Here is a 380-residue protein sequence, read N- to C-terminus: Chaperone protein DnaJ (380 aa).

Positions aspartate 5–glycine 72 constitute a J domain. The CR-type zinc-finger motif lies at glycine 140 to glutamine 218. Cysteine 153, cysteine 156, cysteine 170, cysteine 173, cysteine 192, cysteine 195, cysteine 206, and cysteine 209 together coordinate Zn(2+). CXXCXGXG motif repeat units follow at residues cysteine 153 to glycine 160, cysteine 170 to glycine 177, cysteine 192 to glycine 199, and cysteine 206 to glycine 213. A disordered region spans residues lysine 359 to serine 380. Residues tryptophan 371 to serine 380 are compositionally biased toward basic and acidic residues.

Belongs to the DnaJ family. Homodimer. It depends on Zn(2+) as a cofactor.

It localises to the cytoplasm. Functionally, participates actively in the response to hyperosmotic and heat shock by preventing the aggregation of stress-denatured proteins and by disaggregating proteins, also in an autonomous, DnaK-independent fashion. Unfolded proteins bind initially to DnaJ; upon interaction with the DnaJ-bound protein, DnaK hydrolyzes its bound ATP, resulting in the formation of a stable complex. GrpE releases ADP from DnaK; ATP binding to DnaK triggers the release of the substrate protein, thus completing the reaction cycle. Several rounds of ATP-dependent interactions between DnaJ, DnaK and GrpE are required for fully efficient folding. Also involved, together with DnaK and GrpE, in the DNA replication of plasmids through activation of initiation proteins. This chain is Chaperone protein DnaJ, found in Delftia acidovorans (strain DSM 14801 / SPH-1).